We begin with the raw amino-acid sequence, 29 residues long: Augerpeptide hheTx2 (29 aa).

Contains 4 disulfide bonds. In terms of tissue distribution, expressed by the venom duct.

The protein localises to the secreted. The protein is Augerpeptide hheTx2 of Hastula hectica (Sea snail).